The primary structure comprises 296 residues: AUGMIN subunit 2 (296 aa).

Coiled-coil stretches lie at residues 56–83 (DDLIRVLRELSVVQRKIADLQVELQGRK) and 253–285 (AVHKTRRQNNDQNEEEEEEEEEEDGNNNGNRRL). The tract at residues 218–296 (AVSLPTTPGG…WPPSVKKSSV (79 aa)) is disordered. Residues 264 to 277 (QNEEEEEEEEEEDG) are compositionally biased toward acidic residues.

This sequence belongs to the HAUS2 family. As to quaternary structure, part of the augmin complex composed of 8 subunits. The complex acts on microtubules and interacts with gamma-tubulin in spindles and the phragmoplast.

Contributes to the assembly of the acentrosomal spindle and phragmoplast microtubule arrays as part of the augmin complex. The chain is AUGMIN subunit 2 from Arabidopsis thaliana (Mouse-ear cress).